The following is a 612-amino-acid chain: Threonine--tRNA ligase (612 aa).

The interval 218–509 (DHRKLGVELG…LSEHFGGNFP (292 aa)) is catalytic. 3 residues coordinate Zn(2+): Cys310, His361, and His486.

The protein belongs to the class-II aminoacyl-tRNA synthetase family. In terms of assembly, homodimer. Zn(2+) is required as a cofactor.

The protein resides in the cytoplasm. It catalyses the reaction tRNA(Thr) + L-threonine + ATP = L-threonyl-tRNA(Thr) + AMP + diphosphate + H(+). In terms of biological role, catalyzes the attachment of threonine to tRNA(Thr) in a two-step reaction: L-threonine is first activated by ATP to form Thr-AMP and then transferred to the acceptor end of tRNA(Thr). Also edits incorrectly charged L-seryl-tRNA(Thr). This chain is Threonine--tRNA ligase, found in Helicobacter pylori (strain J99 / ATCC 700824) (Campylobacter pylori J99).